The sequence spans 125 residues: Ribosome-binding factor A (125 aa).

This sequence belongs to the RbfA family. Monomer. Binds 30S ribosomal subunits, but not 50S ribosomal subunits or 70S ribosomes.

The protein resides in the cytoplasm. Functionally, one of several proteins that assist in the late maturation steps of the functional core of the 30S ribosomal subunit. Associates with free 30S ribosomal subunits (but not with 30S subunits that are part of 70S ribosomes or polysomes). Required for efficient processing of 16S rRNA. May interact with the 5'-terminal helix region of 16S rRNA. The protein is Ribosome-binding factor A of Akkermansia muciniphila (strain ATCC BAA-835 / DSM 22959 / JCM 33894 / BCRC 81048 / CCUG 64013 / CIP 107961 / Muc).